Here is a 132-residue protein sequence, read N- to C-terminus: Group 2 truncated hemoglobin YjbI (132 aa).

Heme is bound by residues Thr45, Lys48, Tyr63, and His76.

The protein belongs to the truncated hemoglobin family. Group II subfamily. In terms of assembly, monomer. Heme is required as a cofactor.

In terms of biological role, hemoglobin-like protein that exhibits a low peroxidase activity. Its very high oxygen affinity may rule out the possibility that it is involved in oxygen transport. The protein is Group 2 truncated hemoglobin YjbI (yjbI) of Bacillus subtilis (strain 168).